The following is a 583-amino-acid chain: Protein disulfide-isomerase-like protein of the testis (583 aa).

A signal peptide spans M1–A17. Residues N58, N128, N160, and N340 are each glycosylated (N-linked (GlcNAc...) asparagine). The region spanning L388–D451 is the Thioredoxin domain. Composition is skewed to basic and acidic residues over residues E522 to P531 and N540 to E559. The segment at E522–L583 is disordered. N-linked (GlcNAc...) asparagine glycosylation is present at N540. Residues Q573–L583 are compositionally biased toward basic residues. The Prevents secretion from ER motif lies at K580–L583.

This sequence belongs to the protein disulfide isomerase family. In terms of assembly, homodimer. The homodimer is not disulfide-linked. Interacts with ERO1A and CLGN. In terms of processing, N-glycosylated.

The protein localises to the endoplasmic reticulum. Probable redox-inactive chaperone involved in spermatogenesis. The polypeptide is Protein disulfide-isomerase-like protein of the testis (PDILT) (Macaca fascicularis (Crab-eating macaque)).